We begin with the raw amino-acid sequence, 335 residues long: LIM and SH3 domain protein F42H10.3 (335 aa).

The LIM zinc-binding domain maps to 5–65 (CAREDCGKTV…DPHYPKTVAS (61 aa)). 2 Nebulin repeats span residues 66-97 (VMAD…KMKG) and 98-132 (TKIE…QKAR). Residues 128–142 (DQKARQEEVRPKEEI) show a composition bias toward basic and acidic residues. Disordered regions lie at residues 128 to 151 (DQKA…PTPI) and 233 to 264 (DFAG…ISPT). A compositionally biased stretch (low complexity) spans 242-260 (SNSISSTSPHSTLSSPQST). One can recognise an SH3 domain in the interval 266–327 (KAGFAVKAIY…PANYVQPHKL (62 aa)).

In Caenorhabditis elegans, this protein is LIM and SH3 domain protein F42H10.3.